The chain runs to 476 residues: WD repeat, SAM and U-box domain-containing protein 1 (476 aa).

7 WD repeats span residues 10–47 (DHSD…ELPY), 52–91 (GHTY…MLAV), 95–134 (PTGS…FYRS), 137–176 (VKDG…LCNE), 178–227 (AHDL…FLGG), 237–276 (GHSA…ILHT), and 279–318 (QHTR…PCAG). Residues 333–396 (WSEDDVSAWL…LQKIEELRMK (64 aa)) form the SAM domain. Residues 403–476 (AVPDEFLCPI…ISRWLETQQK (74 aa)) form the U-box domain.

In Gallus gallus (Chicken), this protein is WD repeat, SAM and U-box domain-containing protein 1 (WDSUB1).